Consider the following 161-residue polypeptide: Cytochrome c-type biogenesis protein CcmE (161 aa).

At 1-8 (MNPRRKKR) the chain is on the cytoplasmic side. Residues 9–29 (LGLILALFVGISATVGLMLYA) form a helical; Signal-anchor for type II membrane protein membrane-spanning segment. The Periplasmic portion of the chain corresponds to 30 to 161 (LNQNMDLFYT…TEQQKQGTGQ (132 aa)). Heme is bound by residues histidine 129 and tyrosine 133. Residues 142-161 (MKKTHEPLQYTEQQKQGTGQ) are disordered. A compositionally biased stretch (polar residues) spans 151–161 (YTEQQKQGTGQ).

Belongs to the CcmE/CycJ family.

Its subcellular location is the cell inner membrane. Its function is as follows. Heme chaperone required for the biogenesis of c-type cytochromes. Transiently binds heme delivered by CcmC and transfers the heme to apo-cytochromes in a process facilitated by CcmF and CcmH. The protein is Cytochrome c-type biogenesis protein CcmE of Aliivibrio fischeri (strain MJ11) (Vibrio fischeri).